A 452-amino-acid polypeptide reads, in one-letter code: Probable ECA polymerase (452 aa).

11 helical membrane-spanning segments follow: residues 6-26, 37-57, 63-83, 118-138, 155-175, 181-201, 207-227, 228-248, 341-361, 378-398, and 410-430; these read FSGL…LTWF, VFFS…TSVL, VGVA…CFYG, VILM…NGFL, GVAL…VYFL, AWLF…MIVG, IIIA…ISLW, MLVA…LKRY, LVVM…GLII, YKAA…IVLA, and VFFL…FWLF.

Belongs to the WzyE family. As to quaternary structure, probably part of a complex composed of WzxE, WzyE and WzzE.

Its subcellular location is the cell inner membrane. It functions in the pathway bacterial outer membrane biogenesis; enterobacterial common antigen biosynthesis. Its function is as follows. Probably involved in the polymerization of enterobacterial common antigen (ECA) trisaccharide repeat units. This is Probable ECA polymerase from Salmonella agona (strain SL483).